The following is a 252-amino-acid chain: Adenosylcobinamide-GDP ribazoletransferase (252 aa).

Transmembrane regions (helical) follow at residues 34–54 (GASFMPLVGVIVGGIQWIIYK), 55–75 (LCIIIFSLNVSIVIVILAGIV), 113–133 (YACLAIIIDILLKYSFFCSIV), 138–158 (LIIIIAPVMSRFSIVFIAFIG), 174–194 (IGKWQLFWAAFITVITLFFLM), 198–218 (FIYVIILIFAGLFMSFLFNVF), and 230–250 (LLGANNEIVEILTMVMLCVII).

The protein belongs to the CobS family. Mg(2+) is required as a cofactor.

The protein resides in the cell membrane. It catalyses the reaction alpha-ribazole + adenosylcob(III)inamide-GDP = adenosylcob(III)alamin + GMP + H(+). The enzyme catalyses alpha-ribazole 5'-phosphate + adenosylcob(III)inamide-GDP = adenosylcob(III)alamin 5'-phosphate + GMP + H(+). The protein operates within cofactor biosynthesis; adenosylcobalamin biosynthesis; adenosylcobalamin from cob(II)yrinate a,c-diamide: step 7/7. Functionally, joins adenosylcobinamide-GDP and alpha-ribazole to generate adenosylcobalamin (Ado-cobalamin). Also synthesizes adenosylcobalamin 5'-phosphate from adenosylcobinamide-GDP and alpha-ribazole 5'-phosphate. This Clostridium kluyveri (strain NBRC 12016) protein is Adenosylcobinamide-GDP ribazoletransferase.